A 478-amino-acid chain; its full sequence is Catalase easC (478 aa).

His-54 is a catalytic residue. Tyr-343 is a binding site for heme. The segment at 459 to 478 (VAEKARPDSPSRAQPGQLRL) is disordered.

Belongs to the catalase family. Heme is required as a cofactor.

Its pathway is alkaloid biosynthesis; ergot alkaloid biosynthesis. Functionally, catalase; part of the gene cluster that mediates the biosynthesis of fungal ergot alkaloid. DmaW catalyzes the first step of ergot alkaloid biosynthesis by condensing dimethylallyl diphosphate (DMAP) and tryptophan to form 4-dimethylallyl-L-tryptophan. The second step is catalyzed by the methyltransferase easF that methylates 4-dimethylallyl-L-tryptophan in the presence of S-adenosyl-L-methionine, resulting in the formation of 4-dimethylallyl-L-abrine. The catalase easC and the FAD-dependent oxidoreductase easE then transform 4-dimethylallyl-L-abrine to chanoclavine-I which is further oxidized by easD in the presence of NAD(+), resulting in the formation of chanoclavine-I aldehyde. Chanoclavine-I aldehyde is the precursor of ergoamides and ergopeptines in Clavicipitaceae, and clavine-type alcaloids such as fumiclavine in Trichocomaceae. However, the metabolites downstream of chanoclavine-I aldehyde in Arthrodermataceae have not been identified yet. The polypeptide is Catalase easC (Arthroderma benhamiae (strain ATCC MYA-4681 / CBS 112371) (Trichophyton mentagrophytes)).